Reading from the N-terminus, the 542-residue chain is CTP synthase (542 aa).

The segment at 1–265 is amidoligase domain; sequence MARYVFITGG…DSEVLSAFGI (265 aa). CTP is bound at residue serine 13. A UTP-binding site is contributed by serine 13. Position 14 to 19 (14 to 19) interacts with ATP; it reads SLGKGI. Tyrosine 54 lines the L-glutamine pocket. Residue aspartate 71 coordinates ATP. 2 residues coordinate Mg(2+): aspartate 71 and glutamate 139. CTP-binding positions include 146 to 148, 186 to 191, and lysine 222; these read DIE and KTKPTQ. UTP is bound by residues 186 to 191 and lysine 222; that span reads KTKPTQ. The Glutamine amidotransferase type-1 domain occupies 291 to 541; it reads TIAVVGKYTG…IEAAIEQSRL (251 aa). Glycine 353 provides a ligand contact to L-glutamine. Catalysis depends on cysteine 380, which acts as the Nucleophile; for glutamine hydrolysis. L-glutamine is bound by residues 381 to 384, glutamate 404, and arginine 469; that span reads FGMQ. Residues histidine 514 and glutamate 516 contribute to the active site.

This sequence belongs to the CTP synthase family. Homotetramer.

The enzyme catalyses UTP + L-glutamine + ATP + H2O = CTP + L-glutamate + ADP + phosphate + 2 H(+). The catalysed reaction is L-glutamine + H2O = L-glutamate + NH4(+). It catalyses the reaction UTP + NH4(+) + ATP = CTP + ADP + phosphate + 2 H(+). Its pathway is pyrimidine metabolism; CTP biosynthesis via de novo pathway; CTP from UDP: step 2/2. Allosterically activated by GTP, when glutamine is the substrate; GTP has no effect on the reaction when ammonia is the substrate. The allosteric effector GTP functions by stabilizing the protein conformation that binds the tetrahedral intermediate(s) formed during glutamine hydrolysis. Inhibited by the product CTP, via allosteric rather than competitive inhibition. Catalyzes the ATP-dependent amination of UTP to CTP with either L-glutamine or ammonia as the source of nitrogen. Regulates intracellular CTP levels through interactions with the four ribonucleotide triphosphates. This Brucella canis (strain ATCC 23365 / NCTC 10854 / RM-666) protein is CTP synthase.